Here is a 231-residue protein sequence, read N- to C-terminus: Phosphoglycolate phosphatase, plasmid (231 aa).

The active-site Nucleophile is the D14. Mg(2+) contacts are provided by D14, D16, and D175.

This sequence belongs to the HAD-like hydrolase superfamily. CbbY/CbbZ/Gph/YieH family. Homotrimer. Mg(2+) is required as a cofactor.

The enzyme catalyses 2-phosphoglycolate + H2O = glycolate + phosphate. It functions in the pathway organic acid metabolism; glycolate biosynthesis; glycolate from 2-phosphoglycolate: step 1/1. In terms of biological role, specifically catalyzes the dephosphorylation of 2-phosphoglycolate. Is involved in the dissimilation of the intracellular 2-phosphoglycolate formed during the DNA repair of 3'-phosphoglycolate ends, a major class of DNA lesions induced by oxidative stress. This Cupriavidus necator (strain ATCC 17699 / DSM 428 / KCTC 22496 / NCIMB 10442 / H16 / Stanier 337) (Ralstonia eutropha) protein is Phosphoglycolate phosphatase, plasmid (cbbZP).